A 92-amino-acid chain; its full sequence is Large ribosomal subunit protein eL43 (92 aa).

4 residues coordinate Zn(2+): Cys-39, Cys-42, Cys-57, and Cys-60. The C4-type zinc finger occupies 39–60 (CSFCGKTKMKRKAVGIWHCGSC).

Belongs to the eukaryotic ribosomal protein eL43 family. In terms of assembly, component of the large ribosomal subunit.

The protein resides in the cytoplasm. Its function is as follows. Component of the large ribosomal subunit. The ribosome is a large ribonucleoprotein complex responsible for the synthesis of proteins in the cell. The protein is Large ribosomal subunit protein eL43 (RPL37A) of Gallus gallus (Chicken).